A 703-amino-acid polypeptide reads, in one-letter code: Ubiquitin-like modifier-activating enzyme ATG7 (703 aa).

An N-acetylalanine modification is found at A2. The FAP motif motif lies at 15-17 (FAP). Residue K45 forms a Glycyl lysine isopeptide (Lys-Gly) (interchain with G-Cter in ubiquitin) linkage. Catalysis depends on C572, which acts as the Glycyl thioester intermediate. S698 bears the Phosphoserine mark.

Belongs to the ATG7 family. In terms of assembly, homodimer. Interacts with ATG3; this interaction is essential for the transfer of ATG8-like proteins's thioester from ATG7 to ATG3 and plays a role in the conjugation of ATG12 to ATG5. Interacts with ATG12. Forms intermediate conjugates with GABARAPL1. Forms intermediate conjugates with ATG8-like proteins such as GABARAP, GABARAPL2 or MAP1LC3A. Interacts with EP300 acetyltransferase. Interacts with FOXO1. Acetylated by EP300. Post-translationally, polyubiquitinated on Lys-45 via 'Lys-63'-linked ubiquitin by TRIM32; this modification positiely regulates ATG8 and ATG12 activating enzyme activity leading to initiation of autophagy under metabolic stress. In terms of tissue distribution, widely expressed, especially in kidney, liver, lymph nodes and bone marrow.

It is found in the cytoplasm. The protein localises to the preautophagosomal structure. E1-like activating enzyme involved in the 2 ubiquitin-like systems required for cytoplasm to vacuole transport (Cvt) and autophagy. Activates ATG12 for its conjugation with ATG5 as well as the ATG8 family proteins for their conjugation with phosphatidylethanolamine. Both systems are needed for the ATG8 association to Cvt vesicles and autophagosomes membranes. Required for autophagic death induced by caspase-8 inhibition. Facilitates LC3-I lipidation with phosphatidylethanolamine to form LC3-II which is found on autophagosomal membranes. Required for mitophagy which contributes to regulate mitochondrial quantity and quality by eliminating the mitochondria to a basal level to fulfill cellular energy requirements and preventing excess ROS production. Modulates p53/TP53 activity to regulate cell cycle and survival during metabolic stress. Also plays a key role in the maintenance of axonal homeostasis, the prevention of axonal degeneration, the maintenance of hematopoietic stem cells, the formation of Paneth cell granules, as well as in adipose differentiation. Plays a role in regulating the liver clock and glucose metabolism by mediating the autophagic degradation of CRY1 (clock repressor) in a time-dependent manner. This chain is Ubiquitin-like modifier-activating enzyme ATG7, found in Homo sapiens (Human).